The sequence spans 229 residues: Heptaprenylglyceryl phosphate synthase (229 aa).

Mg(2+)-binding residues include D13 and T39.

This sequence belongs to the GGGP/HepGP synthase family. Homodimer. Mg(2+) serves as cofactor.

It carries out the reaction sn-glycerol 1-phosphate + all-trans-heptaprenyl diphosphate = 3-heptaprenyl-sn-glycero-1-phosphate + diphosphate. It functions in the pathway membrane lipid metabolism; glycerophospholipid metabolism. Prenyltransferase that catalyzes in vivo the transfer of the heptaprenyl moiety of heptaprenyl pyrophosphate (HepPP; 35 carbon atoms) to the C3 hydroxyl of sn-glycerol-1-phosphate (G1P), producing heptaprenylglyceryl phosphate (HepGP). This reaction is an ether-bond-formation step in the biosynthesis of archaea-type G1P-based membrane lipids found in Bacillales. The protein is Heptaprenylglyceryl phosphate synthase of Lysinibacillus sphaericus (strain C3-41).